Consider the following 172-residue polypeptide: Glutamyl-tRNA(Gln) amidotransferase subunit C-4, mitochondrial (172 aa).

The N-terminal 23 residues, methionine 1 to phenylalanine 23, are a transit peptide targeting the mitochondrion. A disordered region spans residues proline 51–proline 73.

This sequence belongs to the GatC family. As to quaternary structure, subunit of the heterotrimeric GatCAB amidotransferase (AdT) complex, composed of A, B and C subunits.

The protein localises to the mitochondrion. The enzyme catalyses L-glutamyl-tRNA(Gln) + L-glutamine + ATP + H2O = L-glutaminyl-tRNA(Gln) + L-glutamate + ADP + phosphate + H(+). Its function is as follows. Allows the formation of correctly charged Gln-tRNA(Gln) through the transamidation of misacylated Glu-tRNA(Gln) in the mitochondria. The reaction takes place in the presence of glutamine and ATP through an activated gamma-phospho-Glu-tRNA(Gln). In Culex quinquefasciatus (Southern house mosquito), this protein is Glutamyl-tRNA(Gln) amidotransferase subunit C-4, mitochondrial.